The sequence spans 1463 residues: Kinesin-like protein KIF15 (1463 aa).

A Kinesin motor domain is found at 18–354 (AIKVFVRVRP…LKFARRAKMI (337 aa)). ATP is bound at residue 99–106 (GQTGSGKT). The interval 387–424 (AEGSIPRGPSESGDSQMSNSSTESNGPVSGQQSGSSSS) is disordered. Residues 398-414 (SGDSQMSNSSTESNGPV) are compositionally biased toward polar residues. Positions 415–424 (SGQQSGSSSS) are enriched in low complexity. Coiled coils occupy residues 436-517 (SLRD…LEHN) and 586-646 (TSTL…QGMK). Disordered regions lie at residues 686–720 (AGEETPGGPGFAGLSDNGSPLRSHSTNSLPPSGDI), 1335–1356 (FKEKEDIKSKLEEEREEKSKLT), and 1409–1444 (QLGKAQSDSEQMKRDYEALQKRLTSSSAEPPEEAGA). The segment covering 701-715 (DNGSPLRSHSTNSLP) has biased composition (polar residues). A compositionally biased stretch (basic and acidic residues) spans 1418-1428 (EQMKRDYEALQ).

Belongs to the TRAFAC class myosin-kinesin ATPase superfamily. Kinesin family. KLP2 subfamily. In terms of assembly, homodimer.

Its subcellular location is the cytoplasm. The protein resides in the cytoskeleton. It localises to the spindle. Functionally, plus-end directed kinesin-like motor enzyme involved in mitotic spindle assembly. Plays a role in positioning spindle poles during mitosis, specifically at prometaphase. The protein is Kinesin-like protein KIF15 (KIF15) of Strongylocentrotus purpuratus (Purple sea urchin).